Consider the following 731-residue polypeptide: Inducible ornithine decarboxylase (731 aa).

Residue Lys-356 is modified to N6-(pyridoxal phosphate)lysine.

It belongs to the Orn/Lys/Arg decarboxylase class-I family. As to quaternary structure, dodecamer. It depends on pyridoxal 5'-phosphate as a cofactor.

It carries out the reaction L-ornithine + H(+) = putrescine + CO2. The polypeptide is Inducible ornithine decarboxylase (odcI) (Lactobacillus sp. (strain 30a)).